The sequence spans 766 residues: Ribonuclease Z, mitochondrial (766 aa).

A mitochondrion-targeting transit peptide spans 1–25 (MYLVKSAGSPIYRTLRTLTTSNLMA).

Belongs to the RNase Z family. In terms of assembly, homodimer. Zn(2+) is required as a cofactor.

Its subcellular location is the nucleus. The protein resides in the mitochondrion. The enzyme catalyses Endonucleolytic cleavage of RNA, removing extra 3' nucleotides from tRNA precursor, generating 3' termini of tRNAs. A 3'-hydroxy group is left at the tRNA terminus and a 5'-phosphoryl group is left at the trailer molecule.. Functionally, zinc phosphodiesterase, which displays some tRNA 3'-processing endonuclease activity of nuclear and mitochondrial pre-tRNA. Probably involved in tRNA maturation, by removing a 3'-trailer from precursor tRNA. May participate in tRNA processing in the developing embryo. The polypeptide is Ribonuclease Z, mitochondrial (Drosophila melanogaster (Fruit fly)).